Here is a 152-residue protein sequence, read N- to C-terminus: CASP-like protein 5C1 (152 aa).

Residues 1–12 are Cytoplasmic-facing; sequence MVRTTASFGTSS. A helical membrane pass occupies residues 13–33; that stretch reads SFVLRLGQTLFSSASLLFMCF. Over 34 to 44 the chain is Extracellular; sequence NDDEDFYAYTT. A helical transmembrane segment spans residues 45 to 65; sequence FCYLVTVMGLVTPWSVTLALM. Over 66 to 80 the chain is Cytoplasmic; that stretch reads EAYSILVKKLPMQAT. Residues 81-101 traverse the membrane as a helical segment; that stretch reads VISVIVAGDFVLSFLSLGGAC. At 102–126 the chain is on the extracellular side; the sequence is STASVAVLLMDAGEKQCDRYKLSAT. The helical transmembrane segment at 127–147 threads the bilayer; sequence MAFLSSFLSFASTFFNFCLLP. Topologically, residues 148 to 152 are cytoplasmic; the sequence is SLMSH.

Belongs to the Casparian strip membrane proteins (CASP) family. In terms of assembly, homodimer and heterodimers.

It is found in the cell membrane. The protein is CASP-like protein 5C1 of Arabidopsis thaliana (Mouse-ear cress).